A 260-amino-acid chain; its full sequence is HTH-type transcriptional repressor NanR (260 aa).

Residues 1-20 are disordered; the sequence is MNPFDSQSEDASDAIGRSLG. An HTH gntR-type domain is found at 27 to 95; it reads KKLSEMVEEE…NGERARVSRP (69 aa). The segment at residues 55 to 74 is a DNA-binding region (H-T-H motif); sequence ERELMAFFNVGRPSVREALA.

It belongs to the NanR family.

In terms of biological role, transcriptional repressor that controls expression of the genes required for the catabolism of sialic acids. This Cronobacter sakazakii (strain ATCC BAA-894) (Enterobacter sakazakii) protein is HTH-type transcriptional repressor NanR.